The following is a 560-amino-acid chain: DNA ligase B (560 aa).

Lys124 (N6-AMP-lysine intermediate) is an active-site residue.

The protein belongs to the NAD-dependent DNA ligase family. LigB subfamily.

It catalyses the reaction NAD(+) + (deoxyribonucleotide)n-3'-hydroxyl + 5'-phospho-(deoxyribonucleotide)m = (deoxyribonucleotide)n+m + AMP + beta-nicotinamide D-nucleotide.. Catalyzes the formation of phosphodiester linkages between 5'-phosphoryl and 3'-hydroxyl groups in double-stranded DNA using NAD as a coenzyme and as the energy source for the reaction. The polypeptide is DNA ligase B (Escherichia coli O139:H28 (strain E24377A / ETEC)).